The sequence spans 141 residues: Light-regulated protein 1, chloroplastic (141 aa).

The N-terminal 41 residues, Met1–Arg41, are a transit peptide targeting the chloroplast. The span at Ser35 to Leu51 shows a compositional bias: low complexity. The disordered stretch occupies residues Ser35–Val58. A 2 X 15 AA approximate repeats region spans residues Val58–Cys132. A run of 2 repeats spans residues Val67–Cys81 and Val118–Cys132.

As to quaternary structure, component of high molecular weight thylakoid LFNRs-containing protein complexes containing LIR1, LFNR1, LFNR2, TIC62 and TROL proteins. Interacts directly with LFNR1 and LFNR2; LIR1 increases the affinity of LFNR1 and LFNR2 for TIC62 and subsequent thylakoid relocalization. Post-translationally, may form interchain disulfide bonds with LFNR1 and LFNR2.

The protein resides in the plastid. Its subcellular location is the chloroplast thylakoid membrane. It localises to the chloroplast envelope. It is found in the chloroplast stroma. Thylakoid-determinant subunit of high molecular weight LFNRs-containing protein complexes. This Arabidopsis thaliana (Mouse-ear cress) protein is Light-regulated protein 1, chloroplastic.